Here is a 372-residue protein sequence, read N- to C-terminus: Y-box-binding protein 3 (372 aa).

Residues 1 to 82 (MSEAGEATTT…LATAAGSEDA (82 aa)) form a disordered region. Position 2 is an N-acetylserine (serine 2). Serine 2 is modified (phosphoserine). A compositionally biased stretch (low complexity) spans 7-28 (ATTTTTTTLPQAPTEAAAAAPQ). Serine 34 carries the phosphoserine modification. The span at 35-79 (PVGSGAPQAAAPAPAAHVAGNPGGDAAPAATGTAAAASLATAAGS) shows a compositional bias: low complexity. The region spanning 93–157 (GTVKWFNVRN…GEKGAEAANV (65 aa)) is the CSD domain. Serine 134, serine 201, serine 203, and serine 204 each carry phosphoserine. Residues 181–372 (YYGRRRGPPR…APPTQQSSAE (192 aa)) are disordered. Positions 222–238 (QLRRPQYRPQYRQRRFP) are enriched in basic residues. An Omega-N-methylarginine modification is found at arginine 251. Polar residues predominate over residues 314–324 (QQATSGPNQPS). At serine 324 the chain carries Phosphoserine. Arginine 326 carries the post-translational modification Omega-N-methylarginine. Over residues 327–340 (RGYRRPYNYRRRPR) the composition is skewed to basic residues. A phosphoserine mark is found at serine 346, serine 369, and serine 370.

In terms of assembly, found in a mRNP complex with YBX2. Interacts with RRP1B. Highly expressed in skeletal muscle and heart.

It is found in the cytoplasm. It localises to the nucleus. In terms of biological role, binds to the GM-CSF promoter. Seems to act as a repressor. Also binds to full-length mRNA and to short RNA sequences containing the consensus site 5'-UCCAUCA-3'. May have a role in translation repression. The chain is Y-box-binding protein 3 (YBX3) from Homo sapiens (Human).